A 144-amino-acid chain; its full sequence is Sirohydrochlorin cobaltochelatase (144 aa).

The Proton acceptor role is filled by H9. Residue H9 coordinates Co(2+). H9 lines the Ni(2+) pocket. Substrate is bound by residues E45 and 70 to 75 (LAPGNH). H75 is a Co(2+) binding site. H75 contacts Ni(2+). A disordered region spans residues 89–112 (GDDEGGHHHHHDHEHHHHHHDTTA). The segment covering 95 to 108 (HHHHHDHEHHHHHH) has biased composition (basic residues).

It belongs to the CbiX family. CbiXS subfamily. Homotetramer; dimer of dimers.

The catalysed reaction is Co-sirohydrochlorin + 2 H(+) = sirohydrochlorin + Co(2+). The enzyme catalyses Ni-sirohydrochlorin + 2 H(+) = sirohydrochlorin + Ni(2+). It participates in cofactor biosynthesis; adenosylcobalamin biosynthesis; cob(II)yrinate a,c-diamide from sirohydrochlorin (anaerobic route): step 1/10. Catalyzes the insertion of Co(2+) into sirohydrochlorin as part of the anaerobic pathway to cobalamin biosynthesis. Involved in the biosynthesis of the unique nickel-containing tetrapyrrole coenzyme F430, the prosthetic group of methyl-coenzyme M reductase (MCR), which plays a key role in methanogenesis and anaerobic methane oxidation. Catalyzes the insertion of Ni(2+) into sirohydrochlorin to yield Ni-sirohydrochlorin. In Methanococcus maripaludis (strain DSM 14266 / JCM 13030 / NBRC 101832 / S2 / LL), this protein is Sirohydrochlorin cobaltochelatase.